Reading from the N-terminus, the 511-residue chain is Ent-copalyl diphosphate synthase (511 aa).

A divalent metal cation contacts are provided by Asp-291 and Asp-293. Positions 291–294 (DSDD) match the DXDD motif motif.

Belongs to the terpene synthase family. Homodimer. A divalent metal cation serves as cofactor.

The catalysed reaction is (2E,6E,10E)-geranylgeranyl diphosphate = ent-copalyl diphosphate. Its pathway is antibiotic biosynthesis. In terms of biological role, involved in viguiepinol biosynthesis. Catalyzes the conversion of geranylgeranyl diphosphate (GGDP) into copalyl diphosphate (ent-CDP). This is Ent-copalyl diphosphate synthase from Streptomyces sp. (strain KO-3988).